The following is a 38-amino-acid chain: Conotoxin FVIA (38 aa).

Residues 1–12 (ILSLSLLDRSTR) constitute a propeptide that is removed on maturation. 3 disulfides stabilise this stretch: C13–C28, C20–C32, and C27–C37. Cysteine amide is present on C37.

It belongs to the conotoxin O1 superfamily. Expressed by the venom duct.

It is found in the secreted. In terms of biological role, omega-conotoxins act at presynaptic membranes, they bind and block voltage-gated calcium channels (Cav). This peptide reversibly and selectively inhibits Cav2.2/CACNA1B (IC(50)=11.5 nM) voltage-gated calcium channels. Channel time recovery after toxin exposure is short (about 50 seconds). In vivo, it effectively and dose-dependently reduces nociceptive behavior in the formalin test and in neuropathic pain models, and reduces mechanical and thermal allodynia in the tail nerve injury rat model. It also shows significant analgesic effects on writhing in mouse neurotransmitter- and cytokine-induced pain models, though it has no effect on acute thermal pain and interferon-gamma-induced pain. It also depresses blood pressure immediately after administration, but pressure recovers relatively quickly and completely. This chain is Conotoxin FVIA, found in Conus fulmen (Thunderbolt cone).